The primary structure comprises 225 residues: MPLYLPDDETFASFWPGDNPSLLAALQNVLRQEHSGYIYIWSREGAGRSHLLHAACAELSQRGDAVGYVPLDKRTWFVPEVLEGMEQLALVCIDNIECVAGDEPWEMAIFNLYNRILESGKTRLLITGDRPPRQLNLGLPDLASRLDWGQIYKLQPLSDEDKLQALQLRARLRGFEMPEDVCRFLLKRLDREMRSLFMTLDQLDHASITAQRKLTIPFVKEILKL.

The protein belongs to the DnaA family. HdA subfamily. In terms of assembly, the active form seems to be an ADP-bound monomer. Forms the RIDA complex (regulatory inactivation of DnaA) of ATP-DnaA, ADP-Hda and the DNA-loaded beta sliding clamp (dnaN).

Its function is as follows. Mediates the interaction of DNA replication initiator protein DnaA with DNA polymerase subunit beta sliding clamp (dnaN). Stimulates hydrolysis of ATP-DnaA to ADP-DnaA, rendering DnaA inactive for reinitiation, a process called regulatory inhibition of DnaA or RIDA. This Klebsiella pneumoniae (strain 342) protein is DnaA regulatory inactivator Hda.